A 73-amino-acid chain; its full sequence is uncharacterized protein (73 aa).

2 helical membrane passes run 10–30 and 42–62; these read ILLAILFFALVVSLVGLYVSA and YSTVYKVLMNAAMLLIVIYLI.

It is found in the cell membrane. This is an uncharacterized protein from Archaeoglobus fulgidus (strain ATCC 49558 / DSM 4304 / JCM 9628 / NBRC 100126 / VC-16).